Here is a 64-residue protein sequence, read N- to C-terminus: Large ribosomal subunit protein bL35c (64 aa).

This sequence belongs to the bacterial ribosomal protein bL35 family.

The protein resides in the plastid. It localises to the chloroplast. The sequence is that of Large ribosomal subunit protein bL35c from Thalassiosira pseudonana (Marine diatom).